A 440-amino-acid polypeptide reads, in one-letter code: Putative purine permease YwdJ (440 aa).

The next 13 membrane-spanning stretches (helical) occupy residues 3–23 (LVLG…VVPV), 39–59 (LIQS…LKGH), 67–87 (PAGL…TVFA), 96–116 (LQGA…FKVI), 130–150 (VYLL…ILGI), 156–176 (GVDG…FIMT), 188–208 (ILLA…AKPI), 231–251 (GLII…LASM), 283–303 (LLSG…AGFI), 314–334 (FMLG…MNTF), 341–361 (VGFA…FAEF), 374–394 (SIIG…ETAL), and 399–419 (PVFI…AIAA).

This sequence belongs to the nucleobase:cation symporter-2 (NCS2) (TC 2.A.40) family.

Its subcellular location is the cell membrane. The protein is Putative purine permease YwdJ (ywdJ) of Bacillus subtilis (strain 168).